The primary structure comprises 877 residues: Leucine--tRNA ligase (877 aa).

The 'HIGH' region motif lies at 43-53 (PYPSGRIHMGH). A 'KMSKS' region motif is present at residues 628 to 632 (KMSKS). Position 631 (Lys631) interacts with ATP.

It belongs to the class-I aminoacyl-tRNA synthetase family.

The protein localises to the cytoplasm. The enzyme catalyses tRNA(Leu) + L-leucine + ATP = L-leucyl-tRNA(Leu) + AMP + diphosphate. The chain is Leucine--tRNA ligase from Brucella suis biovar 1 (strain 1330).